Here is an 80-residue protein sequence, read N- to C-terminus: MKLVLAIVLILMLLSLSTGAEMSDNHASRSATALTDRLLGPKASICRGTGGRCTKDKHCCGWLCCGGPSVGCATSFAPCN.

Residues 1–19 form the signal peptide; it reads MKLVLAIVLILMLLSLSTG. Residues 20 to 42 constitute a propeptide that is removed on maturation; the sequence is AEMSDNHASRSATALTDRLLGPK. Cystine bridges form between C46/C60, C53/C65, C59/C72, and C64/C79.

This sequence belongs to the conotoxin I3 superfamily. In terms of tissue distribution, expressed by the venom duct.

Its subcellular location is the secreted. This chain is Conotoxin Pu11.1, found in Conus pulicarius (Flea-bitten cone).